Consider the following 134-residue polypeptide: UPF0102 protein Dvul_2148 (134 aa).

Belongs to the UPF0102 family.

This is UPF0102 protein Dvul_2148 from Nitratidesulfovibrio vulgaris (strain DP4) (Desulfovibrio vulgaris).